The following is a 246-amino-acid chain: 1-(5-phosphoribosyl)-5-[(5-phosphoribosylamino)methylideneamino] imidazole-4-carboxamide isomerase (246 aa).

The active-site Proton acceptor is the Asp8. The active-site Proton donor is Asp130.

The protein belongs to the HisA/HisF family.

Its subcellular location is the cytoplasm. It catalyses the reaction 1-(5-phospho-beta-D-ribosyl)-5-[(5-phospho-beta-D-ribosylamino)methylideneamino]imidazole-4-carboxamide = 5-[(5-phospho-1-deoxy-D-ribulos-1-ylimino)methylamino]-1-(5-phospho-beta-D-ribosyl)imidazole-4-carboxamide. It functions in the pathway amino-acid biosynthesis; L-histidine biosynthesis; L-histidine from 5-phospho-alpha-D-ribose 1-diphosphate: step 4/9. This is 1-(5-phosphoribosyl)-5-[(5-phosphoribosylamino)methylideneamino] imidazole-4-carboxamide isomerase from Alcanivorax borkumensis (strain ATCC 700651 / DSM 11573 / NCIMB 13689 / SK2).